Reading from the N-terminus, the 351-residue chain is MRKIIHVDMDCFFAAVEMRDNPALRDIPIAIGGSRERRGVISTANYPARQFGVRSAMPTAMALKLCPHLTLLPGRFDAYKEASRHVRDIFSRYTSLIEPLSLDEAWLDVTDSPHCYGSATLIAREIRQTIFNELQLTASAGVAPVKFLAKIASDLNKPNGQYVITPADVPDFLKTLPLAKIPGVGKVSAAKLENMGLRTCGDIQQCDLAMLLKRFGKFGRVLWERSQGIDERDVNSERLRKSVGVERTLAEDIHEWSDCEAIIEHLYPELERRLAIVKPDLLIARQGVKLKFNDFQQTTQEHVWPQLNKEDLITTARKTWDERRGERGVRLVGLHVTLLDPQLERQLVLGL.

Residues 4 to 185 form the UmuC domain; that stretch reads IIHVDMDCFF…LPLAKIPGVG (182 aa). Asp8 and Asp103 together coordinate Mg(2+). Glu104 is a catalytic residue.

It belongs to the DNA polymerase type-Y family. In terms of assembly, monomer. Mg(2+) serves as cofactor.

The protein resides in the cytoplasm. The catalysed reaction is DNA(n) + a 2'-deoxyribonucleoside 5'-triphosphate = DNA(n+1) + diphosphate. Functionally, poorly processive, error-prone DNA polymerase involved in untargeted mutagenesis. Copies undamaged DNA at stalled replication forks, which arise in vivo from mismatched or misaligned primer ends. These misaligned primers can be extended by PolIV. Exhibits no 3'-5' exonuclease (proofreading) activity. May be involved in translesional synthesis, in conjunction with the beta clamp from PolIII. The polypeptide is DNA polymerase IV (Salmonella paratyphi B (strain ATCC BAA-1250 / SPB7)).